The sequence spans 159 residues: 2-C-methyl-D-erythritol 2,4-cyclodiphosphate synthase (159 aa).

Residues aspartate 10 and histidine 12 each contribute to the a divalent metal cation site. 4-CDP-2-C-methyl-D-erythritol 2-phosphate contacts are provided by residues 10-12 (DVH) and 36-37 (HS). Histidine 44 is an a divalent metal cation binding site. 4-CDP-2-C-methyl-D-erythritol 2-phosphate-binding positions include 58–60 (DIG), 63–67 (FSDTD), and arginine 144.

This sequence belongs to the IspF family. In terms of assembly, homotrimer. The cofactor is a divalent metal cation.

The enzyme catalyses 4-CDP-2-C-methyl-D-erythritol 2-phosphate = 2-C-methyl-D-erythritol 2,4-cyclic diphosphate + CMP. It participates in isoprenoid biosynthesis; isopentenyl diphosphate biosynthesis via DXP pathway; isopentenyl diphosphate from 1-deoxy-D-xylulose 5-phosphate: step 4/6. In terms of biological role, involved in the biosynthesis of isopentenyl diphosphate (IPP) and dimethylallyl diphosphate (DMAPP), two major building blocks of isoprenoid compounds. Catalyzes the conversion of 4-diphosphocytidyl-2-C-methyl-D-erythritol 2-phosphate (CDP-ME2P) to 2-C-methyl-D-erythritol 2,4-cyclodiphosphate (ME-CPP) with a corresponding release of cytidine 5-monophosphate (CMP). This Paraburkholderia xenovorans (strain LB400) protein is 2-C-methyl-D-erythritol 2,4-cyclodiphosphate synthase.